Here is a 256-residue protein sequence, read N- to C-terminus: Trypsin, alkaline C (256 aa).

An N-terminal signal peptide occupies residues 1 to 17 (MRLFLALLALGFAAVAA). The propeptide at 18 to 24 (VPANPQR) is activation peptide. The 232-residue stretch at 25–256 (IVGGSTTTIQ…RYTSWISNNS (232 aa)) folds into the Peptidase S1 domain. Residues Cys55 and Cys71 are joined by a disulfide bond. Catalysis depends on charge relay system residues His70 and Asp115. 2 cysteine pairs are disulfide-bonded: Cys180–Cys197 and Cys209–Cys233. Ser213 (charge relay system) is an active-site residue.

This sequence belongs to the peptidase S1 family. Midgut.

The protein resides in the secreted. Its subcellular location is the extracellular space. It catalyses the reaction Preferential cleavage: Arg-|-Xaa, Lys-|-Xaa.. In Manduca sexta (Tobacco hawkmoth), this protein is Trypsin, alkaline C.